A 681-amino-acid polypeptide reads, in one-letter code: DNA ligase (681 aa).

NAD(+) is bound by residues Asp34–Asp38, Ser83–Leu84, and Glu112. The active-site N6-AMP-lysine intermediate is Lys114. NAD(+)-binding residues include Arg135, Glu169, Lys285, and Lys309. 4 residues coordinate Zn(2+): Cys403, Cys406, Cys422, and Cys427. One can recognise a BRCT domain in the interval Thr584–Lys673.

This sequence belongs to the NAD-dependent DNA ligase family. LigA subfamily. It depends on Mg(2+) as a cofactor. Mn(2+) serves as cofactor.

It catalyses the reaction NAD(+) + (deoxyribonucleotide)n-3'-hydroxyl + 5'-phospho-(deoxyribonucleotide)m = (deoxyribonucleotide)n+m + AMP + beta-nicotinamide D-nucleotide.. Its function is as follows. DNA ligase that catalyzes the formation of phosphodiester linkages between 5'-phosphoryl and 3'-hydroxyl groups in double-stranded DNA using NAD as a coenzyme and as the energy source for the reaction. It is essential for DNA replication and repair of damaged DNA. The chain is DNA ligase from Fervidobacterium nodosum (strain ATCC 35602 / DSM 5306 / Rt17-B1).